Reading from the N-terminus, the 612-residue chain is Dihydroxy-acid dehydratase (612 aa).

Residue aspartate 81 participates in Mg(2+) binding. Position 122 (cysteine 122) interacts with [2Fe-2S] cluster. Aspartate 123 and lysine 124 together coordinate Mg(2+). An N6-carboxylysine modification is found at lysine 124. Cysteine 195 provides a ligand contact to [2Fe-2S] cluster. Glutamate 491 is a binding site for Mg(2+). Residue serine 517 is the Proton acceptor of the active site.

Belongs to the IlvD/Edd family. As to quaternary structure, homodimer. The cofactor is [2Fe-2S] cluster. It depends on Mg(2+) as a cofactor.

The catalysed reaction is (2R)-2,3-dihydroxy-3-methylbutanoate = 3-methyl-2-oxobutanoate + H2O. The enzyme catalyses (2R,3R)-2,3-dihydroxy-3-methylpentanoate = (S)-3-methyl-2-oxopentanoate + H2O. It functions in the pathway amino-acid biosynthesis; L-isoleucine biosynthesis; L-isoleucine from 2-oxobutanoate: step 3/4. The protein operates within amino-acid biosynthesis; L-valine biosynthesis; L-valine from pyruvate: step 3/4. Its function is as follows. Functions in the biosynthesis of branched-chain amino acids. Catalyzes the dehydration of (2R,3R)-2,3-dihydroxy-3-methylpentanoate (2,3-dihydroxy-3-methylvalerate) into 2-oxo-3-methylpentanoate (2-oxo-3-methylvalerate) and of (2R)-2,3-dihydroxy-3-methylbutanoate (2,3-dihydroxyisovalerate) into 2-oxo-3-methylbutanoate (2-oxoisovalerate), the penultimate precursor to L-isoleucine and L-valine, respectively. This is Dihydroxy-acid dehydratase from Rhizobium etli (strain ATCC 51251 / DSM 11541 / JCM 21823 / NBRC 15573 / CFN 42).